The sequence spans 244 residues: tRNA (guanine-N(1)-)-methyltransferase (244 aa).

S-adenosyl-L-methionine is bound by residues Gly-113 and 133–138; that span reads IGDYVL.

Belongs to the RNA methyltransferase TrmD family. Homodimer.

The protein resides in the cytoplasm. It carries out the reaction guanosine(37) in tRNA + S-adenosyl-L-methionine = N(1)-methylguanosine(37) in tRNA + S-adenosyl-L-homocysteine + H(+). Specifically methylates guanosine-37 in various tRNAs. The sequence is that of tRNA (guanine-N(1)-)-methyltransferase from Bacillus cereus (strain B4264).